The primary structure comprises 457 residues: MADS-box transcription factor 1 (457 aa).

The 61-residue stretch at 11–71 (PSSPRRSIQR…NACHVYSSEE (61 aa)) folds into the MADS-box domain. 2 disordered regions span residues 195–278 (SGDY…SRLH) and 295–328 (SSGY…LGQE). A compositionally biased stretch (low complexity) spans 199 to 216 (SDSPLEPSSSSSFSVPPE). Polar residues predominate over residues 218-234 (LNPTLSFQHNDVPQTDN). A compositionally biased stretch (basic residues) spans 265-278 (KNRRNGKPRISRLH). Positions 295–317 (SSGYLDPSSTPITPLDSAINQIT) are enriched in polar residues. Ser-372 carries the phosphoserine modification.

Phosphorylated. Occurs periodically during mitosis.

Its subcellular location is the nucleus. Its function is as follows. Acts as a transcriptional activator with a role in the regulation of mitosis. Regulates septation and the periodic transcription of cdc15. This chain is MADS-box transcription factor 1 (mbx1), found in Schizosaccharomyces pombe (strain 972 / ATCC 24843) (Fission yeast).